The primary structure comprises 105 residues: Mini zinc finger protein 2 (105 aa).

Residues 1–29 are disordered; it reads MGPQQDRSAAKPYANGSTAAAAAAGRKEN. The ZF-HD dimerization-type; degenerate zinc-finger motif lies at 35-84; that stretch reads YRECQRNHAASIGGHAVDGCREFMASGADGTAAALLCAACGCHQSFHRRE.

Homo- and heterodimers.

Its subcellular location is the cytoplasm. Functionally, inhibits zinc finger homeodomain (ZHD) transcription factors, by interacting with them to prevent both their nuclear localization and their DNA-binding properties. This Oryza sativa subsp. indica (Rice) protein is Mini zinc finger protein 2 (MIF2).